The chain runs to 199 residues: Thymidine kinase (199 aa).

Residues 15–22 (GSMFSGKS) and 88–91 (DEVQ) each bind ATP. Glutamate 89 functions as the Proton acceptor in the catalytic mechanism. Zn(2+) contacts are provided by cysteine 145, cysteine 148, cysteine 183, and histidine 186.

This sequence belongs to the thymidine kinase family. In terms of assembly, homotetramer.

Its subcellular location is the cytoplasm. It catalyses the reaction thymidine + ATP = dTMP + ADP + H(+). This is Thymidine kinase from Staphylococcus aureus (strain Mu50 / ATCC 700699).